A 258-amino-acid chain; its full sequence is UPF0246 protein YaaA (258 aa).

It belongs to the UPF0246 family.

The sequence is that of UPF0246 protein YaaA from Escherichia coli (strain UTI89 / UPEC).